A 350-amino-acid chain; its full sequence is Histidinol-phosphate aminotransferase 1 (350 aa).

Lys-211 is modified (N6-(pyridoxal phosphate)lysine).

It belongs to the class-II pyridoxal-phosphate-dependent aminotransferase family. Histidinol-phosphate aminotransferase subfamily. Homodimer. The cofactor is pyridoxal 5'-phosphate.

It carries out the reaction L-histidinol phosphate + 2-oxoglutarate = 3-(imidazol-4-yl)-2-oxopropyl phosphate + L-glutamate. The protein operates within amino-acid biosynthesis; L-histidine biosynthesis; L-histidine from 5-phospho-alpha-D-ribose 1-diphosphate: step 7/9. The polypeptide is Histidinol-phosphate aminotransferase 1 (Trichormus variabilis (strain ATCC 29413 / PCC 7937) (Anabaena variabilis)).